The sequence spans 142 residues: Large ribosomal subunit protein uL11 (142 aa).

It belongs to the universal ribosomal protein uL11 family. As to quaternary structure, part of the ribosomal stalk of the 50S ribosomal subunit. Interacts with L10 and the large rRNA to form the base of the stalk. L10 forms an elongated spine to which L12 dimers bind in a sequential fashion forming a multimeric L10(L12)X complex. In terms of processing, one or more lysine residues are methylated.

In terms of biological role, forms part of the ribosomal stalk which helps the ribosome interact with GTP-bound translation factors. The protein is Large ribosomal subunit protein uL11 of Gamma-proteobacterium EBAC31A08.